The primary structure comprises 30 residues: uncharacterized protein (30 aa).

This is an uncharacterized protein from Dictyostelium discoideum (Social amoeba).